Reading from the N-terminus, the 346-residue chain is Enkurin domain-containing protein 1 (346 aa).

Positions 1-35 (MCEGPSRISGPIPPDPTLCPDNYRRPTSAQGRLEG) are disordered. Ser91 bears the Phosphoserine mark. The required for binding to microtubules stretch occupies residues 91 to 171 (SLKRKDPKDH…AHFLRAHSRC (81 aa)). A compositionally biased stretch (basic and acidic residues) spans 114-125 (RFREQERSREQG). Disordered stretches follow at residues 114 to 137 (RFREQERSREQGQPRPLKALWRSP), 167 to 197 (AHSRCGPGLPPPHVSSPQPTPPGPEAKEPGL), and 260 to 280 (AEARKQSQPDPAMPPGHTRMP). A Phosphoserine modification is found at Ser136. Positions 174–190 (GLPPPHVSSPQPTPPGP) are enriched in pro residues. In terms of domain architecture, Enkurin spans 251–343 (ERRDLWRREA…IFSRPKVFVK (93 aa)).

As to quaternary structure, interacts with alpha-tubulin. Interacts (via central region) with CCP110 (via N-terminal region); competes with CEP97 for binding to CCP110.

The protein resides in the cytoplasm. Its subcellular location is the cytoskeleton. It is found in the microtubule organizing center. The protein localises to the centrosome. It localises to the centriole. The protein resides in the cilium basal body. Its subcellular location is the cell projection. It is found in the cilium. The protein localises to the spindle. It localises to the spindle pole. The protein resides in the cilium axoneme. Functionally, microtubule-binding protein which regulates microtubule organization and stability. Promotes the stability of astral microtubules and facilitates the proper orientation of the mitotic spindle. This allows the oriented division of basal keratinocytes and contributes to epidermal stratification. Required for the assembly of both primary and motile cilia. Destabilizes the interaction between CCP110 and CEP97 by competing with CEP97 for binding to CCP110 which promotes the removal of CCP110 and CEP97 from the mother centriole and allows the initiation of ciliogenesis. This is Enkurin domain-containing protein 1 (ENKD1) from Homo sapiens (Human).